The chain runs to 304 residues: N-acetyl-D-glucosamine kinase (304 aa).

ATP-binding positions include 4-11 (GFDMGGTK) and 133-140 (GLGGGLVI). Residues H157, C177, C179, and C184 each coordinate Zn(2+).

It belongs to the ROK (NagC/XylR) family. NagK subfamily.

It carries out the reaction N-acetyl-D-glucosamine + ATP = N-acetyl-D-glucosamine 6-phosphate + ADP + H(+). It functions in the pathway cell wall biogenesis; peptidoglycan recycling. In terms of biological role, catalyzes the phosphorylation of N-acetyl-D-glucosamine (GlcNAc) derived from cell-wall degradation, yielding GlcNAc-6-P. In Pectobacterium atrosepticum (strain SCRI 1043 / ATCC BAA-672) (Erwinia carotovora subsp. atroseptica), this protein is N-acetyl-D-glucosamine kinase.